The sequence spans 346 residues: MRSQDLHQRLADLGAKPLHCGRIVRAWLQGRALDACTARQRAEDFLPLSVRQGLPRVAEELEGIARLHSEHPASDGSSRLLVELADRQRVESVLLPRGGLCVSTQVGCAVGCVFCMTGRSGLLRQVGSLEMVAQVVLARRRRAVKKVVFMGMGEPAHNLDNVLEAIDLLGTDGGIGHKNLVFSTVGDPRVFERLPGQRVKPALALSLHSTDAELRRRLLPKAPPLSPEELVEAGETYARQVDYPIQYQWTLLEGVNDSLEEMDGILRLLKGRFAVMNLIPYNSMDGDAYRRPRGERIVELVRYLHSRGVLTKVRNSAGQDIDGGCGQLRARAEGAAPQRHIRVRRG.

Glu91 (proton acceptor) is an active-site residue. The Radical SAM core domain occupies 94–320; that stretch reads LLPRGGLCVS…TKVRNSAGQD (227 aa). The cysteines at positions 101 and 325 are disulfide-linked. Positions 108, 112, and 115 each coordinate [4Fe-4S] cluster. S-adenosyl-L-methionine contacts are provided by residues 153–154, Ser183, 206–208, and Asn282; these read GE and SLH. The S-methylcysteine intermediate role is filled by Cys325.

The protein belongs to the radical SAM superfamily. RlmN family. The cofactor is [4Fe-4S] cluster.

Its subcellular location is the cytoplasm. This chain is Probable RNA methyltransferase PSPA7_3453, found in Pseudomonas paraeruginosa (strain DSM 24068 / PA7) (Pseudomonas aeruginosa (strain PA7)).